Consider the following 24-residue polypeptide: Brevinin-1CSa (24 aa).

An intrachain disulfide couples cysteine 18 to cysteine 24.

Expressed by the skin glands.

The protein localises to the secreted. The protein resides in the target cell membrane. In terms of biological role, antibacterial peptide. Has activity against the Gram-positive bacterium S.aureus (MIC=2 uM) and the Gram-negative bacterium E.coli (MIC=32 uM). Has a strong hemolytic activity (LC(50)=5 uM). The polypeptide is Brevinin-1CSa (Rana cascadae (Cascades frog)).